Reading from the N-terminus, the 117-residue chain is MTSSSTILQRLTQTIEARKSADPAHSYIAKLLSSNEDKVLKKIAEEAAETIMACKDNDREQIIYETADLWFHCLIMLARHDISPEAILSELERREGVSGIEEKLSRSQNQPEPTKAE.

Basic and acidic residues predominate over residues 96-105 (GVSGIEEKLS). The interval 96 to 117 (GVSGIEEKLSRSQNQPEPTKAE) is disordered. The span at 106 to 117 (RSQNQPEPTKAE) shows a compositional bias: polar residues.

This sequence belongs to the PRA-PH family.

The protein resides in the cytoplasm. It catalyses the reaction 1-(5-phospho-beta-D-ribosyl)-ATP + H2O = 1-(5-phospho-beta-D-ribosyl)-5'-AMP + diphosphate + H(+). It functions in the pathway amino-acid biosynthesis; L-histidine biosynthesis; L-histidine from 5-phospho-alpha-D-ribose 1-diphosphate: step 2/9. In Nitrosomonas eutropha (strain DSM 101675 / C91 / Nm57), this protein is Phosphoribosyl-ATP pyrophosphatase.